The following is a 103-amino-acid chain: Large ribosomal subunit protein bL21 (103 aa).

It belongs to the bacterial ribosomal protein bL21 family. In terms of assembly, part of the 50S ribosomal subunit. Contacts protein L20.

Functionally, this protein binds to 23S rRNA in the presence of protein L20. This Paraburkholderia phytofirmans (strain DSM 17436 / LMG 22146 / PsJN) (Burkholderia phytofirmans) protein is Large ribosomal subunit protein bL21.